The following is an 86-amino-acid chain: Large ribosomal subunit protein uL10 (86 aa).

This sequence belongs to the universal ribosomal protein uL10 family. As to quaternary structure, part of the ribosomal stalk of the 50S ribosomal subunit. The N-terminus interacts with L11 and the large rRNA to form the base of the stalk. The C-terminus forms an elongated spine to which L12 dimers bind in a sequential fashion forming a multimeric L10(L12)X complex.

In terms of biological role, forms part of the ribosomal stalk, playing a central role in the interaction of the ribosome with GTP-bound translation factors. The polypeptide is Large ribosomal subunit protein uL10 (rplJ) (Serratia marcescens).